The chain runs to 562 residues: Protein wntless (562 aa).

The Cytoplasmic portion of the chain corresponds to M1 to K13. Residues L14 to L34 traverse the membrane as a helical segment. Residues Y35 to H239 are Lumenal-facing. N-linked (GlcNAc...) asparagine glycosylation occurs at N58. The helical transmembrane segment at V240–W260 threads the bilayer. Residues R261 to P270 lie on the Cytoplasmic side of the membrane. The helical transmembrane segment at A271–L291 threads the bilayer. Over E292–Q311 the chain is Lumenal. The helical transmembrane segment at G312–I332 threads the bilayer. Topologically, residues Q333–R344 are cytoplasmic. Residues Y345–S365 traverse the membrane as a helical segment. At E366 to K386 the chain is on the lumenal side. The chain crosses the membrane as a helical span at residues V387 to C407. The Cytoplasmic portion of the chain corresponds to Y408–R441. The chain crosses the membrane as a helical span at residues F442 to M462. At G463–S482 the chain is on the lumenal side. A helical transmembrane segment spans residues A483–Y503. Residues A504 to E562 are Cytoplasmic-facing. Positions S538–E562 are disordered. The segment covering N539–T556 has biased composition (polar residues).

The protein belongs to the wntless family. Interacts with wg; in the Golgi. Interacts with Vps35, a component of the retromer complex; wls stability is regulated by Vps35.

Its subcellular location is the presynaptic cell membrane. It localises to the postsynaptic cell membrane. The protein localises to the cell membrane. It is found in the endoplasmic reticulum membrane. The protein resides in the endosome membrane. Its subcellular location is the golgi apparatus membrane. A segment polarity gene required for wingless (wg)-dependent patterning processes, acting in both wg-sending cells and wg-target cells. In non-neuronal cells wls directs wg secretion. The wls traffic loop encompasses the Golgi, the cell surface, an endocytic compartment and a retrograde route leading back to the Golgi, and involves clathrin-mediated endocytosis and the retromer complex (a conserved protein complex consisting of Vps35 and Vps26). In neuronal cells (the larval motorneuron NMJ), the wg signal moves across the synapse via the release of wls-containing exosome-like vesicles. Postsynaptic wls is required for the trafficking of fz2 through the fz2-interacting protein Grip. The polypeptide is Protein wntless (Drosophila persimilis (Fruit fly)).